We begin with the raw amino-acid sequence, 83 residues long: Mitotic-spindle organizing protein 1 (83 aa).

The protein belongs to the MOZART1 family. In terms of assembly, part of the gamma-tubulin complex.

The protein localises to the cytoplasm. The protein resides in the cytoskeleton. It is found in the microtubule organizing center. Its subcellular location is the spindle pole body. Its function is as follows. Required for gamma-tubulin complex recruitment to the microtubule organizing center (MTOC). The polypeptide is Mitotic-spindle organizing protein 1 (Botryotinia fuckeliana (strain B05.10) (Noble rot fungus)).